The chain runs to 261 residues: MSYSNSNPENYSAATSSPELKLYQAFIFSVPICFTFIILFLFYLIYLRRSSSDLSSLGMRTTFIPGNSLSTIELGLSKELREMLPIVVFKESFTVMDSQCSVCLGDYQPNDKLQQIPVCKHTFHMDCIDLWLTSHTTCPLCRLALIPSRSRQSQDDPVPSLVSPDEEVSSQPESEPVNHRVVSTQPESEPVNHSGVSSQPESQPVVNHRGVSSQPESQPVNHINDGHEQQCDQDVEGFKEMEEDERNNIGTSSACCSCRTG.

A helical transmembrane segment spans residues 25–45; the sequence is AFIFSVPICFTFIILFLFYLI. An RING-type; atypical zinc finger spans residues 100–142; the sequence is CSVCLGDYQPNDKLQQIPVCKHTFHMDCIDLWLTSHTTCPLCR. Disordered stretches follow at residues 149–227 and 241–261; these read RSRQ…NDGH and MEEDERNNIGTSSACCSCRTG. A compositionally biased stretch (polar residues) spans 194–221; sequence SGVSSQPESQPVVNHRGVSSQPESQPVN.

Belongs to the RING-type zinc finger family. ATL subfamily.

The protein localises to the membrane. It catalyses the reaction S-ubiquitinyl-[E2 ubiquitin-conjugating enzyme]-L-cysteine + [acceptor protein]-L-lysine = [E2 ubiquitin-conjugating enzyme]-L-cysteine + N(6)-ubiquitinyl-[acceptor protein]-L-lysine.. The protein operates within protein modification; protein ubiquitination. This Arabidopsis thaliana (Mouse-ear cress) protein is RING-H2 finger protein ATL58 (ATL58).